The chain runs to 452 residues: Probable glycine dehydrogenase (decarboxylating) subunit 1 (452 aa).

It belongs to the GcvP family. N-terminal subunit subfamily. As to quaternary structure, the glycine cleavage system is composed of four proteins: P, T, L and H. In this organism, the P 'protein' is a heterodimer of two subunits.

It carries out the reaction N(6)-[(R)-lipoyl]-L-lysyl-[glycine-cleavage complex H protein] + glycine + H(+) = N(6)-[(R)-S(8)-aminomethyldihydrolipoyl]-L-lysyl-[glycine-cleavage complex H protein] + CO2. Functionally, the glycine cleavage system catalyzes the degradation of glycine. The P protein binds the alpha-amino group of glycine through its pyridoxal phosphate cofactor; CO(2) is released and the remaining methylamine moiety is then transferred to the lipoamide cofactor of the H protein. In Novosphingobium aromaticivorans (strain ATCC 700278 / DSM 12444 / CCUG 56034 / CIP 105152 / NBRC 16084 / F199), this protein is Probable glycine dehydrogenase (decarboxylating) subunit 1.